The primary structure comprises 72 residues: Protein Kish (72 aa).

The first 26 residues, 1–26 (MSALFNFRSLLQVILLLICSCSYVHG), serve as a signal peptide directing secretion. Topologically, residues 27–53 (QWPSLLDRYKNHEVLGAFWKMARVGER) are lumenal. Residues 54 to 72 (ASPYVSLACILMAISQFNS) traverse the membrane as a helical segment.

This sequence belongs to the KISH family.

It localises to the endoplasmic reticulum membrane. Its subcellular location is the golgi apparatus membrane. Involved in the early part of the secretory pathway. The protein is Protein Kish of Saccharomyces cerevisiae (strain ATCC 204508 / S288c) (Baker's yeast).